A 437-amino-acid polypeptide reads, in one-letter code: Enolase (437 aa).

Glutamine 162 provides a ligand contact to (2R)-2-phosphoglycerate. Glutamate 204 functions as the Proton donor in the catalytic mechanism. Mg(2+) contacts are provided by aspartate 251, glutamate 297, and aspartate 324. The (2R)-2-phosphoglycerate site is built by lysine 349, arginine 378, serine 379, and lysine 400. Lysine 349 acts as the Proton acceptor in catalysis.

Belongs to the enolase family. The cofactor is Mg(2+).

It is found in the cytoplasm. The protein resides in the secreted. It localises to the cell surface. The enzyme catalyses (2R)-2-phosphoglycerate = phosphoenolpyruvate + H2O. The protein operates within carbohydrate degradation; glycolysis; pyruvate from D-glyceraldehyde 3-phosphate: step 4/5. Its function is as follows. Catalyzes the reversible conversion of 2-phosphoglycerate (2-PG) into phosphoenolpyruvate (PEP). It is essential for the degradation of carbohydrates via glycolysis. In Pelodictyon phaeoclathratiforme (strain DSM 5477 / BU-1), this protein is Enolase.